The sequence spans 113 residues: Putative pterin-4-alpha-carbinolamine dehydratase (113 aa).

This sequence belongs to the pterin-4-alpha-carbinolamine dehydratase family.

The enzyme catalyses (4aS,6R)-4a-hydroxy-L-erythro-5,6,7,8-tetrahydrobiopterin = (6R)-L-erythro-6,7-dihydrobiopterin + H2O. The chain is Putative pterin-4-alpha-carbinolamine dehydratase from Nitrosomonas eutropha (strain DSM 101675 / C91 / Nm57).